Reading from the N-terminus, the 105-residue chain is Replication restart protein PriB (105 aa).

Residues 1–102 enclose the SSB domain; sequence MTANRLTLSG…LHAEQIELID (102 aa).

It belongs to the PriB family. In terms of assembly, homodimer. Interacts with PriA and DnaT. Component of the replication restart primosome. Primosome assembly occurs via a 'hand-off' mechanism. PriA binds to replication forks, subsequently PriB then DnaT bind; DnaT then displaces ssDNA to generate the helicase loading substrate.

Its function is as follows. Involved in the restart of stalled replication forks, which reloads the replicative helicase on sites other than the origin of replication; the PriA-PriB pathway is the major replication restart pathway. During primosome assembly it facilitates complex formation between PriA and DnaT on DNA; stabilizes PriA on DNA. Stimulates the DNA unwinding activity of PriA helicase. The polypeptide is Replication restart protein PriB (Serratia proteamaculans (strain 568)).